A 364-amino-acid polypeptide reads, in one-letter code: Ribosomal RNA large subunit methyltransferase F (364 aa).

Positions 1-52 are disordered; sequence MPKPAIKTAAKLAMSSAGKRGKPSTPKSLAKPQTTKPKTASKLKAKHGEQKR. Positions 25 to 38 are enriched in polar residues; the sequence is TPKSLAKPQTTKPK.

The protein belongs to the methyltransferase superfamily. METTL16/RlmF family.

The protein localises to the cytoplasm. It carries out the reaction adenosine(1618) in 23S rRNA + S-adenosyl-L-methionine = N(6)-methyladenosine(1618) in 23S rRNA + S-adenosyl-L-homocysteine + H(+). Specifically methylates the adenine in position 1618 of 23S rRNA. This chain is Ribosomal RNA large subunit methyltransferase F, found in Shewanella sp. (strain ANA-3).